The chain runs to 378 residues: Signal peptide peptidase (378 aa).

A disordered region spans residues 1 to 27 (MDSAVSDPHNGSAEAGTPANGTTRPPS). The Lumenal segment spans residues 1 to 31 (MDSAVSDPHNGSAEAGTPANGTTRPPSTPEG). N-linked (GlcNAc...) asparagine glycosylation is found at asparagine 10 and asparagine 20. The helical transmembrane segment at 32–52 (IALAYGSLLLMALLPIFFGAL) threads the bilayer. Over 53–77 (RSVRCARGKSSSDMPETITSRDAAR) the chain is Cytoplasmic. A helical transmembrane segment spans residues 78–98 (FPIIASCTLLGLYLFFKIFSQ). At 99–100 (EY) the chain is on the lumenal side. A helical transmembrane segment spans residues 101 to 121 (INLLLSMYFFVLGILALSHTI). Residues 122–157 (SPFMNKFFPANFPNRQYQLLFTQGSGENKEEIINYE) lie on the Cytoplasmic side of the membrane. Residues 158 to 178 (FDTKDLVCLGLSSVVGVWYLL) form a helical membrane-spanning segment. Residues 179–181 (RKH) are Lumenal-facing. A helical membrane pass occupies residues 182 to 202 (WIANNLFGLAFSLNGVELLHL). Residues 203-209 (NNVSTGC) are Cytoplasmic-facing. The helical transmembrane segment at 210 to 230 (ILLGGLFIYDIFWVFGTNVMV) threads the bilayer. Residue aspartate 219 is part of the active site. Residues 231-256 (TVAKSFEAPIKLVFPQDLLEKGLEAD) are Lumenal-facing. A helical membrane pass occupies residues 257-277 (NFAMLGLGDIVIPGIFIALLL). Residue aspartate 265 is part of the active site. Over 278–290 (RFDISLKKNTHTY) the chain is Cytoplasmic. A helical transmembrane segment spans residues 291 to 311 (FYTSFAAYIFGLGLTIFIMHI). Over 312–314 (FKH) the chain is Lumenal. Residues 315–335 (AQPALLYLVPACIGFPVLVAL) traverse the membrane as a helical segment. The PAL motif lies at 317–319 (PAL). Residues 336-378 (AKGEVAEMFSYEESNPKDPAAETESKEESTEASASKRLEKKEK) are Cytoplasmic-facing. The segment at 346 to 378 (YEESNPKDPAAETESKEESTEASASKRLEKKEK) is disordered. Residues 349–378 (SNPKDPAAETESKEESTEASASKRLEKKEK) are compositionally biased toward basic and acidic residues. Serine 368 is modified (phosphoserine).

It belongs to the peptidase A22B family. As to quaternary structure, monomer. Homodimer. Interacts with RNF139. Interacts with DERL1 and XBP1 isoform 1. Widely expressed with highest levels in liver and kidney. In the brain, expressed predominantly in hippocampus, amygdala, piriform cortex, choroid plexus and arcuate nucleus of the hypothalamic area. Isoform 1 is more strongly expressed than isoform 4 in most tissues except brain and skeletal muscle where isoform 4 is the dominant isoform and in testis where isoform 1 and isoform 4 are expressed at similar levels. In the brain, isoform 4 is not detected in the choroid plexus.

It is found in the endoplasmic reticulum membrane. The protein localises to the membrane. It localises to the cell membrane. Catalyzes intramembrane proteolysis of signal peptides that have been removed from precursors of secretory and membrane proteins, resulting in the release of the fragment from the ER membrane into the cytoplasm. Required to generate lymphocyte cell surface (HLA-E) epitopes derived from MHC class I signal peptides. Involved in the intramembrane cleavage of the integral membrane protein PSEN1. Cleaves the integral membrane protein XBP1 isoform 1 in a DERL1/RNF139-dependent manner. May play a role in graft rejection. The sequence is that of Signal peptide peptidase from Mus musculus (Mouse).